Reading from the N-terminus, the 206-residue chain is High frequency lysogenization protein HflD homolog (206 aa).

This sequence belongs to the HflD family.

It is found in the cytoplasm. The protein localises to the cell inner membrane. The protein is High frequency lysogenization protein HflD homolog of Pseudomonas syringae pv. syringae (strain B728a).